We begin with the raw amino-acid sequence, 483 residues long: Zinc finger CCCH domain-containing protein 25 (483 aa).

The segment at R157–P184 adopts a C3H1-type zinc-finger fold. The region spanning R228–P301 is the RRM domain. Disordered regions lie at residues W298–V317 and P336–Q483. A compositionally biased stretch (pro residues) spans P336–P351. Residues S370–S380 show a composition bias toward low complexity. The segment covering D381–T391 has biased composition (polar residues). 2 stretches are compositionally biased toward low complexity: residues M392 to H401 and Y409 to Y423. Pro residues predominate over residues Q438–D459. Over residues S460–A476 the composition is skewed to low complexity.

The sequence is that of Zinc finger CCCH domain-containing protein 25 from Arabidopsis thaliana (Mouse-ear cress).